The following is a 677-amino-acid chain: Methionine--tRNA ligase (677 aa).

A 'HIGH' region motif is present at residues 15–25 (PYANGSIHLGH). The Zn(2+) site is built by Cys146, Cys149, Cys159, and Cys162. The 'KMSKS' region motif lies at 333-337 (KMSKS). Lys336 provides a ligand contact to ATP. The 103-residue stretch at 575 to 677 (DFAKIDLRVA…DGAKPGQQVK (103 aa)) folds into the tRNA-binding domain.

It belongs to the class-I aminoacyl-tRNA synthetase family. MetG type 1 subfamily. Homodimer. It depends on Zn(2+) as a cofactor.

It localises to the cytoplasm. It catalyses the reaction tRNA(Met) + L-methionine + ATP = L-methionyl-tRNA(Met) + AMP + diphosphate. In terms of biological role, is required not only for elongation of protein synthesis but also for the initiation of all mRNA translation through initiator tRNA(fMet) aminoacylation. In Salmonella typhi, this protein is Methionine--tRNA ligase.